Consider the following 703-residue polypeptide: Protein CNGC15c (703 aa).

A compositionally biased stretch (basic and acidic residues) spans 1–10; that stretch reads MGFDNPRSER. The tract at residues 1–23 is disordered; the sequence is MGFDNPRSERFEDDPEISKIPTT. A run of 5 helical transmembrane segments spans residues 91-111, 179-199, 216-236, 255-275, and 372-392; these read IFLVACLVSLFVDPLFFYLPV, GFWLDFIAALPLPQVLIWIII, FFIIFQYIPRLYLIFPLSSQI, LMLYMLASHILGACWYLLSIE, and FIGEIMVAIVVATLGLVLFAL. 480–565 contacts a nucleoside 3',5'-cyclic phosphate; the sequence is LFDQMDERML…WALDPRPSVI (86 aa). Residues 616–644 enclose the IQ domain; sequence RTWAACFIQAAWRRHKKRKEAAELRAKEN. The segment at 676–703 is disordered; the sequence is KGVNMHSGTNSGVVSSLQKPTEPDFSDE. The segment covering 681-694 has biased composition (polar residues); sequence HSGTNSGVVSSLQK.

It belongs to the cyclic nucleotide-gated cation channel (TC 1.A.1.5) family. Interacts (via N-terminus) with DMI1 (via c-terminus). The Nod factor has no effect on this interaction, implying that the complex is maintained after activation. As to expression, expressed in roots, stems, leaves, flowers and pods.

The protein resides in the nucleus membrane. In terms of biological role, cyclic nucleotide-gated channel involved in the establishment of both rhizobial and mycorrhizal associations. Required for full activation of nuclear-localized Ca(2+) oscillations by Nod and Myc factors. Simultaneous activation of the K(+)-permeable channel DMI1 and the Ca(2+) channel CNGC15 can give rise to sustained Ca(2+) oscillations. May function during fertilization in both female and male gametophytic Ca(2+) signaling. This chain is Protein CNGC15c, found in Medicago truncatula (Barrel medic).